The following is a 342-amino-acid chain: Photosystem II assembly lipoprotein Ycf48 (342 aa).

The first 28 residues, M1 to S28, serve as a signal peptide directing secretion. The N-palmitoyl cysteine moiety is linked to residue C29. C29 carries the S-diacylglycerol cysteine lipid modification. The short motif at R196–R220 is the Arg-rich patch element. A propeptide spanning residues M340–P342 is cleaved from the precursor.

It belongs to the Ycf48 family. In terms of assembly, part of early PSII assembly complexes which includes D1 (psbA) and PsbI; not found in mature PSII. By two-hybrid analysis in yeast interacts with precursor and intermediate forms of D1, but less with mature D1. Binds to the lumenal side of PSI and PSII complexes. Coimmunoprecipitates with YidC. Purified chlorophyll- and carotenoid-containing photosystem II (PSII) assembly intermediate complex RCII* (iD1, D1, D2, PsbE, PsbF, PsbI, Ycf39, Ycf48, HliC and HliD). In terms of processing, the last 3 residues are removed in the mature protein.

The protein resides in the cellular thylakoid membrane. In terms of biological role, a factor required for optimal assembly of photosystem II (PSII) which acts in the early stages of PSII assembly. Also plays a role in replacement of photodamaged D1 (psbA). May interact with precursor D1 to prevent its premature processing before association with D2 (psbD). May also play a role in chlorophyll insertion into chlorophyll-binding proteins. Increasing levels of chlorophyll precursors partially suppresses deletion of this protein, supporting the idea that Ycf48 assists YidC in synthesis of chlorophyll-binding proteins. The Ycf39-Hlip complex binds D1 at an early stage of PSII assembly along with Ycf48, ribosomes and ChlG, the last enzyme in chlorophyll biosynthesis; it may be involved in chlorophyll reuse and delivery to D1 in the initial stages of PSII assembly. The protein is Photosystem II assembly lipoprotein Ycf48 of Synechocystis sp. (strain ATCC 27184 / PCC 6803 / Kazusa).